Reading from the N-terminus, the 445-residue chain is UPF0210 protein SPP_0289 (445 aa).

The protein belongs to the UPF0210 family. As to quaternary structure, homodimer.

The sequence is that of UPF0210 protein SPP_0289 from Streptococcus pneumoniae (strain P1031).